Reading from the N-terminus, the 151-residue chain is Acidic phospholipase A2 6 (151 aa).

Positions 1–27 (MYPAHLLVLLAVCVSLLGAASIPARPL) are cleaved as a signal peptide. 7 cysteine pairs are disulfide-bonded: cysteine 38-cysteine 104, cysteine 54-cysteine 151, cysteine 56-cysteine 72, cysteine 71-cysteine 132, cysteine 78-cysteine 125, cysteine 88-cysteine 118, and cysteine 111-cysteine 123. The Ca(2+) site is built by tyrosine 55, glycine 57, and glycine 59. The active site involves histidine 75. Aspartate 76 serves as a coordination point for Ca(2+). Aspartate 126 is an active-site residue.

This sequence belongs to the phospholipase A2 family. Group I subfamily. D49 sub-subfamily. Ca(2+) serves as cofactor. In terms of tissue distribution, expressed by the venom gland.

It is found in the secreted. The enzyme catalyses a 1,2-diacyl-sn-glycero-3-phosphocholine + H2O = a 1-acyl-sn-glycero-3-phosphocholine + a fatty acid + H(+). Its function is as follows. PLA2 catalyzes the calcium-dependent hydrolysis of the 2-acyl groups in 3-sn-phosphoglycerides. The polypeptide is Acidic phospholipase A2 6 (Tropidechis carinatus (Australian rough-scaled snake)).